The sequence spans 666 residues: Polyamine deacetylase HDAC10 (666 aa).

The segment at 1 to 323 (MGTALVYHED…VCMMVQTLLG (323 aa)) is histone deacetylase. His135 is an active-site residue.

The protein belongs to the histone deacetylase family. HD type 2 subfamily. Interacts with HDAC3. Interacts with HDAC2 and NCOR2/SMRT. Interacts with HSPA8/HSC70. Interacts with MSH2. As to expression, widely expressed.

The protein resides in the cytoplasm. The protein localises to the nucleus. The enzyme catalyses N(8)-acetylspermidine + H2O = spermidine + acetate. It catalyses the reaction N-acetylputrescine + H2O = putrescine + acetate. The catalysed reaction is N-acetylcadaverine + H2O = cadaverine + acetate. It carries out the reaction N(6)-acetyl-L-lysyl-[protein] + H2O = L-lysyl-[protein] + acetate. Polyamine deacetylase (PDAC), which acts preferentially on N(8)-acetylspermidine, and also on acetylcadaverine and acetylputrescine. Exhibits attenuated catalytic activity toward N(1),N(8)-diacetylspermidine and very low activity, if any, toward N(1)-acetylspermidine. Histone deacetylase activity has been observed in vitro. Has also been shown to be involved in MSH2 deacetylation. The physiological relevance of protein/histone deacetylase activity is unclear and could be very weak. May play a role in the promotion of late stages of autophagy, possibly autophagosome-lysosome fusion and/or lysosomal exocytosis in neuroblastoma cells. May play a role in homologous recombination. May promote DNA mismatch repair. The chain is Polyamine deacetylase HDAC10 (Hdac10) from Mus musculus (Mouse).